The chain runs to 89 residues: MNIIKSKTGNFKFISRIGILNYKRCFTTVKTPQPLEPHEHPKPMEPNEFDPKPDDPPRNPDPSPFPNEVPKPKPSDFPIPDELYPQPIV.

The segment at 31-89 is disordered; the sequence is TPQPLEPHEHPKPMEPNEFDPKPDDPPRNPDPSPFPNEVPKPKPSDFPIPDELYPQPIV. Residues 36–58 show a composition bias toward basic and acidic residues; that stretch reads EPHEHPKPMEPNEFDPKPDDPPR. Residues 59–69 are compositionally biased toward pro residues; sequence NPDPSPFPNEV.

This is an uncharacterized protein from Dictyostelium discoideum (Social amoeba).